A 96-amino-acid polypeptide reads, in one-letter code: Small ribosomal subunit protein bS6 (96 aa).

Belongs to the bacterial ribosomal protein bS6 family.

Functionally, binds together with bS18 to 16S ribosomal RNA. The chain is Small ribosomal subunit protein bS6 from Streptococcus equi subsp. zooepidemicus (strain MGCS10565).